A 489-amino-acid polypeptide reads, in one-letter code: Probable cytosol aminopeptidase (489 aa).

Residues K255 and D260 each coordinate Mn(2+). Residue K267 is part of the active site. Mn(2+) contacts are provided by D279, D339, and E341. The active site involves R343.

It belongs to the peptidase M17 family. Mn(2+) is required as a cofactor.

Its subcellular location is the cytoplasm. The enzyme catalyses Release of an N-terminal amino acid, Xaa-|-Yaa-, in which Xaa is preferably Leu, but may be other amino acids including Pro although not Arg or Lys, and Yaa may be Pro. Amino acid amides and methyl esters are also readily hydrolyzed, but rates on arylamides are exceedingly low.. It catalyses the reaction Release of an N-terminal amino acid, preferentially leucine, but not glutamic or aspartic acids.. Functionally, presumably involved in the processing and regular turnover of intracellular proteins. Catalyzes the removal of unsubstituted N-terminal amino acids from various peptides. In Synechococcus sp. (strain CC9605), this protein is Probable cytosol aminopeptidase.